The following is a 115-amino-acid chain: Large ribosomal subunit protein uL24 (115 aa).

2 disordered regions span residues 45–77 (VRQS…STGK) and 96–115 (KASG…KAAS).

Belongs to the universal ribosomal protein uL24 family. As to quaternary structure, part of the 50S ribosomal subunit.

In terms of biological role, one of two assembly initiator proteins, it binds directly to the 5'-end of the 23S rRNA, where it nucleates assembly of the 50S subunit. Functionally, one of the proteins that surrounds the polypeptide exit tunnel on the outside of the subunit. The chain is Large ribosomal subunit protein uL24 from Rhodopirellula baltica (strain DSM 10527 / NCIMB 13988 / SH1).